The sequence spans 443 residues: ATP-dependent protease ATPase subunit HslU (443 aa).

Residues isoleucine 18, 60–65, aspartate 256, glutamate 321, and arginine 393 each bind ATP; that span reads GVGKTE.

This sequence belongs to the ClpX chaperone family. HslU subfamily. In terms of assembly, a double ring-shaped homohexamer of HslV is capped on each side by a ring-shaped HslU homohexamer. The assembly of the HslU/HslV complex is dependent on binding of ATP.

It localises to the cytoplasm. Functionally, ATPase subunit of a proteasome-like degradation complex; this subunit has chaperone activity. The binding of ATP and its subsequent hydrolysis by HslU are essential for unfolding of protein substrates subsequently hydrolyzed by HslV. HslU recognizes the N-terminal part of its protein substrates and unfolds these before they are guided to HslV for hydrolysis. In Buchnera aphidicola subsp. Acyrthosiphon pisum (strain 5A), this protein is ATP-dependent protease ATPase subunit HslU.